The following is a 1104-amino-acid chain: Valine--tRNA ligase, mitochondrial (1104 aa).

The transit peptide at 1-47 (MNKWLNTLSKTFTFRLLNCHYRRSLPLCQNFSLKKSLTHNQVRFFKM) directs the protein to the mitochondrion. The residue at position 73 (serine 73) is a Phosphoserine. Positions 99-119 (KKNAAATTGASQKKPKKKKEV) are disordered. The 'HIGH' region motif lies at 190–200 (PNVTGALHIGH). 2 positions are modified to phosphoserine: serine 294 and serine 332. A 'KMSKS' region motif is present at residues 703-707 (KMSKS). Lysine 706 contacts ATP. A Phosphoserine modification is found at serine 707. Phosphothreonine is present on threonine 1003.

The protein belongs to the class-I aminoacyl-tRNA synthetase family.

The protein localises to the cytoplasm. The protein resides in the mitochondrion. It carries out the reaction tRNA(Val) + L-valine + ATP = L-valyl-tRNA(Val) + AMP + diphosphate. This Saccharomyces cerevisiae (strain ATCC 204508 / S288c) (Baker's yeast) protein is Valine--tRNA ligase, mitochondrial (VAS1).